Reading from the N-terminus, the 433-residue chain is Adenylosuccinate synthetase (433 aa).

Residues 11–17 and 39–41 each bind GTP; these read GDEGKGK and GHT. D12 serves as the catalytic Proton acceptor. The Mg(2+) site is built by D12 and G39. Residues 12 to 15, 37 to 40, T134, R148, N230, T245, and R309 each bind IMP; these read DEGK and NAGH. H40 serves as the catalytic Proton donor. 305–311 provides a ligand contact to substrate; the sequence is VTTGRKR. Residues R311, 337–339, and 419–421 each bind GTP; these read KLD and GTG.

The protein belongs to the adenylosuccinate synthetase family. As to quaternary structure, homodimer. It depends on Mg(2+) as a cofactor.

It localises to the cytoplasm. The catalysed reaction is IMP + L-aspartate + GTP = N(6)-(1,2-dicarboxyethyl)-AMP + GDP + phosphate + 2 H(+). Its pathway is purine metabolism; AMP biosynthesis via de novo pathway; AMP from IMP: step 1/2. Plays an important role in the de novo pathway and in the salvage pathway of purine nucleotide biosynthesis. Catalyzes the first committed step in the biosynthesis of AMP from IMP. The protein is Adenylosuccinate synthetase of Saccharomyces cerevisiae (strain YJM789) (Baker's yeast).